Consider the following 121-residue polypeptide: Small ribosomal subunit protein uS13 (121 aa).

The interval 93–121 is disordered; the sequence is RGLPVRGQNTKNNARTRKGPRRTVANKKK. A compositionally biased stretch (basic residues) spans 106 to 121; that stretch reads ARTRKGPRRTVANKKK.

Belongs to the universal ribosomal protein uS13 family. In terms of assembly, part of the 30S ribosomal subunit. Forms a loose heterodimer with protein S19. Forms two bridges to the 50S subunit in the 70S ribosome.

In terms of biological role, located at the top of the head of the 30S subunit, it contacts several helices of the 16S rRNA. In the 70S ribosome it contacts the 23S rRNA (bridge B1a) and protein L5 of the 50S subunit (bridge B1b), connecting the 2 subunits; these bridges are implicated in subunit movement. Contacts the tRNAs in the A and P-sites. In Bacillus pumilus (strain SAFR-032), this protein is Small ribosomal subunit protein uS13.